The primary structure comprises 1275 residues: MGSNTESDAEKALGSRLDYDLMMAEEYILSDVEKNFILSCERGDLPGVKKILEEYQGTDKFNINCTDPMNRSALISAIENENFDLMVILLEHNIEVGDALLHAISEEYVEAVEELLQWEETNHKEGQPYSWEAVDRSKSTFTVDITPLILAAHRNNYEILKILLDRGATLPMPHDVKCGCDECVTSQMTDSLRHSQSRINAYRALSASSLIALSSRDPVLTAFQLSWELKRLQAMESEFRAEYTEMRQMVQDFGTSLLDHARTSMELEVMLNFNHEPSHDIWCLGQRQTLERLKLAIRYKQKTFVAHPNVQQLLAAIWYDGLPGFRRKQASQQLMDVVKLGCSFPIYSLKYILAPDSEGAKFMRKPFVKFITHSCSYMFFLMLLGAASLRVVQITFELLAFPWMLTMLEDWRKHERGSLPGPIELAIITYIMALIFEELKSLYSDGLFEYIMDLWNIVDYISNMFYVTWILCRATAWVIVHRDLWFRGIDPYFPREHWHPFDPMLLSEGAFAAGMVFSYLKLVHIFSINPHLGPLQVSLGRMIIDIIKFFFIYTLVLFAFGCGLNQLLWYYAELEKNKCYHLHPDVADFDDQEKACTIWRRFSNLFETSQSLFWASFGLVDLVSFDLAGIKSFTRFWALLMFGSYSVINIIVLLNMLIAMMSNSYQIISERADTEWKFARSQLWMSYFEDGGTIPPPFNLCPNMKMLRKTLGRKRPSRTKSFMRKSMERAQTLHDKVMKLLVRRYITAEQRRRDDYGITEDDIIEVRQDISSLRFELLEIFTNNNWDVPDIEKKSQGVARTTKGKVMERRILKDFQIGFVENLKQEMSESESGRDIFSSLAKVIGRKKTQKGDKDWNAIARKNTFASDPIGSKRSSMQRHSQRSLRRKIIEQANEGLQMNQTQLIEFNPNLGDVTRATRVAYVKFMRKKMAADEVSLADDEGAPNGEGEKKPLDASGSKKSITSGGTGGGASMLAAAALRASVKNVDEKSGADGKPGTMGKPTDDKKAGDDKDKQQPPKDSKPSAGGPKPGDQKPTPGAGAPKPQAAGTISKPGESQKKDAPAPPTKPGDTKPAAPKPGESAKPEAAAKKEESSKTEASKPAATNGAAKSAAPSAPSDAKPDSKLKPGAAGAPEATKATNGASKPDEKKSGPEEPKKAAGDSKPGDDAKDKDKKPGDDKDKKPGDDKDKKPADNNDKKPADDKDKKPGDDKDKKPGDDKDKKPSDDKDKKPADDKDKKPAAAPLKPAIKVGQSSAAAGGERGKSTVTGRMISGWL.

Over 1–366 the chain is Cytoplasmic; the sequence is MGSNTESDAE…SEGAKFMRKP (366 aa). ANK repeat units follow at residues 69-98 and 143-172; these read MNRS…EVGD and VDIT…TLPM. Residues 367–387 form a helical membrane-spanning segment; sequence FVKFITHSCSYMFFLMLLGAA. The Extracellular segment spans residues 388–418; the sequence is SLRVVQITFELLAFPWMLTMLEDWRKHERGS. A helical transmembrane segment spans residues 419-439; that stretch reads LPGPIELAIITYIMALIFEEL. Residues 440-450 are Cytoplasmic-facing; the sequence is KSLYSDGLFEY. A helical membrane pass occupies residues 451–471; that stretch reads IMDLWNIVDYISNMFYVTWIL. The Extracellular segment spans residues 472–541; it reads CRATAWVIVH…LGPLQVSLGR (70 aa). A helical membrane pass occupies residues 542-562; the sequence is MIIDIIKFFFIYTLVLFAFGC. Residues 563-609 are Cytoplasmic-facing; the sequence is GLNQLLWYYAELEKNKCYHLHPDVADFDDQEKACTIWRRFSNLFETS. A helical membrane pass occupies residues 610-630; the sequence is QSLFWASFGLVDLVSFDLAGI. The Extracellular portion of the chain corresponds to 631–637; the sequence is KSFTRFW. Residues 638–658 form a helical membrane-spanning segment; it reads ALLMFGSYSVINIIVLLNMLI. Over 659-1275 the chain is Cytoplasmic; it reads AMMSNSYQII…VTGRMISGWL (617 aa). Residues 933-1275 form a disordered region; sequence DEVSLADDEG…VTGRMISGWL (343 aa). 2 stretches are compositionally biased toward low complexity: residues 955–964 and 972–982; these read ASGSKKSITS and SMLAAAALRAS. Basic and acidic residues predominate over residues 1002–1022; it reads PTDDKKAGDDKDKQQPPKDSK. Residues 1033 to 1049 are compositionally biased toward low complexity; the sequence is QKPTPGAGAPKPQAAGT. A compositionally biased stretch (basic and acidic residues) spans 1080-1098; that stretch reads ESAKPEAAAKKEESSKTEA. Residues 1099 to 1118 are compositionally biased toward low complexity; sequence SKPAATNGAAKSAAPSAPSD. Positions 1144-1239 are enriched in basic and acidic residues; sequence KPDEKKSGPE…KPADDKDKKP (96 aa).

The protein belongs to the transient receptor (TC 1.A.4) family. STrpC subfamily. In terms of assembly, the C-terminus interacts with a PDZ domain of inaD to form the core of the inaD signaling complex. Other members of the complex include norpA (PLC), inaC (PKC), and possibly trpl, ninaC, Fkbp59, calmodulin and rhodopsin. Forms homomultimers and heteromultimers with trpl. Interaction with trpl is mediated in part by the N-terminal region and the transmembrane domains. Also interacts, though to a lower extent, with Trpgamma. Phosphorylated by inaC. In terms of tissue distribution, expressed predominantly in the rhabdomeres of photoreceptor cells. Expressed in the third antennal segment and in the olfactory segment at approximately 70 hours after puparium formation during antennal development.

It localises to the cell membrane. The protein localises to the cell projection. The protein resides in the rhabdomere membrane. Its function is as follows. A light-sensitive calcium channel that is required for inositide-mediated Ca(2+) entry in the retina during phospholipase C (PLC)-mediated phototransduction. Ca(2+) influx may then feed back and inhibit PLC, thereby facilitating phosphatidylinositol 4,5 bisphosphate (PIP2) recycling. Trp and trpl act together in the light response, though it is unclear whether as heteromultimers or as distinct units, and are activated by fatty acids and metabolic stress. Also required for olfactory adaptation and may be involved in olfactory system development. This Drosophila melanogaster (Fruit fly) protein is Transient receptor potential protein (trp).